A 334-amino-acid chain; its full sequence is Phosphate acyltransferase (334 aa).

The protein belongs to the PlsX family. As to quaternary structure, homodimer. Probably interacts with PlsY.

It localises to the cytoplasm. It catalyses the reaction a fatty acyl-[ACP] + phosphate = an acyl phosphate + holo-[ACP]. Its pathway is lipid metabolism; phospholipid metabolism. In terms of biological role, catalyzes the reversible formation of acyl-phosphate (acyl-PO(4)) from acyl-[acyl-carrier-protein] (acyl-ACP). This enzyme utilizes acyl-ACP as fatty acyl donor, but not acyl-CoA. This Fervidobacterium nodosum (strain ATCC 35602 / DSM 5306 / Rt17-B1) protein is Phosphate acyltransferase.